A 110-amino-acid chain; its full sequence is UPF0060 membrane protein Nmul_A0351 (110 aa).

The next 4 helical transmembrane spans lie at 7–27 (LFLF…PYLW), 33–53 (SAWL…LLTL), 63–83 (AAYG…VDGV), and 87–107 (AWDM…MFGP).

The protein belongs to the UPF0060 family.

Its subcellular location is the cell inner membrane. The chain is UPF0060 membrane protein Nmul_A0351 from Nitrosospira multiformis (strain ATCC 25196 / NCIMB 11849 / C 71).